Reading from the N-terminus, the 620-residue chain is Chaperone protein HscA homolog (620 aa).

This sequence belongs to the heat shock protein 70 family.

In terms of biological role, chaperone involved in the maturation of iron-sulfur cluster-containing proteins. Has a low intrinsic ATPase activity which is markedly stimulated by HscB. The chain is Chaperone protein HscA homolog from Pseudomonas savastanoi pv. phaseolicola (strain 1448A / Race 6) (Pseudomonas syringae pv. phaseolicola (strain 1448A / Race 6)).